Consider the following 95-residue polypeptide: Co-chaperonin GroES (95 aa).

This sequence belongs to the GroES chaperonin family. Heptamer of 7 subunits arranged in a ring. Interacts with the chaperonin GroEL.

It localises to the cytoplasm. Functionally, together with the chaperonin GroEL, plays an essential role in assisting protein folding. The GroEL-GroES system forms a nano-cage that allows encapsulation of the non-native substrate proteins and provides a physical environment optimized to promote and accelerate protein folding. GroES binds to the apical surface of the GroEL ring, thereby capping the opening of the GroEL channel. The chain is Co-chaperonin GroES from Dichelobacter nodosus (strain VCS1703A).